A 179-amino-acid polypeptide reads, in one-letter code: Large ribosomal subunit protein uL5 (179 aa).

Belongs to the universal ribosomal protein uL5 family. In terms of assembly, part of the 50S ribosomal subunit; part of the 5S rRNA/L5/L18/L25 subcomplex. Contacts the 5S rRNA and the P site tRNA. Forms a bridge to the 30S subunit in the 70S ribosome.

Functionally, this is one of the proteins that bind and probably mediate the attachment of the 5S RNA into the large ribosomal subunit, where it forms part of the central protuberance. In the 70S ribosome it contacts protein S13 of the 30S subunit (bridge B1b), connecting the 2 subunits; this bridge is implicated in subunit movement. Contacts the P site tRNA; the 5S rRNA and some of its associated proteins might help stabilize positioning of ribosome-bound tRNAs. The protein is Large ribosomal subunit protein uL5 of Clostridium novyi (strain NT).